A 602-amino-acid polypeptide reads, in one-letter code: Myotubularin (602 aa).

The span at 1 to 16 (MATSSTPKYNSNSLEN) shows a compositional bias: polar residues. Residues 1–33 (MATSSTPKYNSNSLENSVRRSPGDGINHEQNDE) are disordered. Positions 17-33 (SVRRSPGDGINHEQNDE) are enriched in basic and acidic residues. The GRAM domain occupies 28 to 96 (HEQNDEISRL…GVIARIEKMG (69 aa)). One can recognise a Myotubularin phosphatase domain in the interval 162–537 (GWAVYDAMTE…RHLELWVNYY (376 aa)). A 1,2-diacyl-sn-glycero-3-phospho-(1D-myo-inositol-3,5-bisphosphate) contacts are provided by Asn-287, Asn-312, and Ile-313. Residues Asn-287, Asn-312, and Ile-313 each contribute to the a 1,2-diacyl-sn-glycero-3-phospho-(1D-myo-inositol-3-phosphate) site. Catalysis depends on Cys-374, which acts as the Phosphocysteine intermediate. Ser-375, Asp-376, Gly-377, Trp-378, Asp-379, Arg-380, Lys-416, and Arg-420 together coordinate a 1,2-diacyl-sn-glycero-3-phospho-(1D-myo-inositol-3,5-bisphosphate). Ser-375, Asp-376, Gly-377, Trp-378, Asp-379, and Arg-380 together coordinate a 1,2-diacyl-sn-glycero-3-phospho-(1D-myo-inositol-3-phosphate). Residue Arg-420 participates in a 1,2-diacyl-sn-glycero-3-phospho-(1D-myo-inositol-3-phosphate) binding. Residues 577-602 (NSPKINRSTTSPSSPSQMMPQVQTPF) are disordered. Low complexity predominate over residues 584 to 602 (STTSPSSPSQMMPQVQTPF).

This sequence belongs to the protein-tyrosine phosphatase family. Non-receptor class myotubularin subfamily.

It is found in the cytoplasm. Its subcellular location is the cell membrane. The protein localises to the cell projection. It localises to the filopodium. The protein resides in the ruffle. It is found in the late endosome. Its subcellular location is the myofibril. The protein localises to the sarcomere. The catalysed reaction is a 1,2-diacyl-sn-glycero-3-phospho-(1D-myo-inositol-3-phosphate) + H2O = a 1,2-diacyl-sn-glycero-3-phospho-(1D-myo-inositol) + phosphate. The enzyme catalyses a 1,2-diacyl-sn-glycero-3-phospho-(1D-myo-inositol-3,5-bisphosphate) + H2O = a 1,2-diacyl-sn-glycero-3-phospho-(1D-myo-inositol-5-phosphate) + phosphate. It carries out the reaction 1,2-dioctanoyl-sn-glycero-3-phospho-(1-D-myo-inositol-3-phosphate) + H2O = 1,2-dioctanoyl-sn-glycero-3-phospho-(1D-myo-inositol) + phosphate. It catalyses the reaction 1,2-dioctanoyl-sn-glycero-3-phospho-(1D-myo-inositol-3,5-bisphosphate) + H2O = 1,2-dioctanoyl-sn-glycero-3-phospho-(1D-myo-inositol-5-phosphate) + phosphate. The catalysed reaction is 1,2-dihexadecanoyl-sn-glycero-3-phospho-(1D-myo-inositol-3,5-phosphate) + H2O = 1,2-dihexadecanoyl-sn-glycero-3-phospho-(1D-myo-inositol-5-phosphate) + phosphate. Lipid phosphatase which dephosphorylates phosphatidylinositol 3-monophosphate (PI3P) and phosphatidylinositol 3,5-bisphosphate (PI(3,5)P2). The chain is Myotubularin (mtm1) from Xenopus laevis (African clawed frog).